Here is a 392-residue protein sequence, read N- to C-terminus: Tryptophan synthase beta chain (392 aa).

K84 carries the N6-(pyridoxal phosphate)lysine modification.

Belongs to the TrpB family. Tetramer of two alpha and two beta chains. Requires pyridoxal 5'-phosphate as cofactor.

The enzyme catalyses (1S,2R)-1-C-(indol-3-yl)glycerol 3-phosphate + L-serine = D-glyceraldehyde 3-phosphate + L-tryptophan + H2O. It participates in amino-acid biosynthesis; L-tryptophan biosynthesis; L-tryptophan from chorismate: step 5/5. In terms of biological role, the beta subunit is responsible for the synthesis of L-tryptophan from indole and L-serine. The chain is Tryptophan synthase beta chain from Campylobacter jejuni subsp. jejuni serotype O:6 (strain 81116 / NCTC 11828).